We begin with the raw amino-acid sequence, 448 residues long: Proline-rich protein 4 (448 aa).

An N-terminal signal peptide occupies residues 1–29 (MRILPEPRGSVPCLLLLVSVLLSATLSLA). 46 consecutive repeat copies span residues 152 to 156 (PMPKL), 157 to 161 (PPFKG), 165 to 169 (PFPLP), 170 to 174 (PPLEL), 175 to 179 (PPFLK), 183 to 187 (PPKYS), 188 to 193 (PPVEVP), 194 to 198 (PPVPV), 201 to 205 (PPPKK), 208 to 212 (PPPVP), 216 to 220 (PPPKK), 222 to 226 (VPPPV), 227 to 231 (PVYKP), 232 to 236 (PPKVE), 238 to 242 (PPPIP), 245 to 249 (PCPPK), 250 to 254 (PPKIE), 256 to 259 (PPPV), 260 to 264 (PVYKP), 265 to 270 (PPKIEK), 271 to 278 (PPPVPVYK), 279 to 284 (PPPKIE), 286 to 294 (PPPVPVHKL), 295 to 299 (PKKPC), 300 to 304 (PPKKV), 306 to 311 (PPPVPV), 314 to 320 (PPTKKPC), 321 to 327 (PPKKVDP), 328 to 334 (PPVPVHK), 335 to 341 (PPPKIVI), 342 to 348 (PPPKIEH), 349 to 356 (PPPVPVYK), 357 to 363 (PPPKIEH), 364 to 368 (PPIYI), 369 to 374 (PPIVKK), 378 to 384 (PPVPIYK), 385 to 389 (PPVVI), 390 to 394 (PKKPC), 395 to 402 (PPPVPVYK), 403 to 407 (PPVVV), 409 to 413 (PKKPC), 414 to 419 (PPLPQL), 420 to 424 (PPLPK), 425 to 429 (FPPLP), 430 to 434 (PKYIH), and 442 to 446 (PPLPP). The segment at 152 to 446 (PMPKLPPFKG…KFGKWPPLPP (295 aa)) is 46 X 5 AA approximate repeats. Pro residues predominate over residues 240-290 (PIPKKPCPPKPPKIEHPPPVPVYKPPPKIEKPPPVPVYKPPPKIEHPPPVP). Residues 240-345 (PIPKKPCPPK…PPKIVIPPPK (106 aa)) are disordered. 2 stretches are compositionally biased toward pro residues: residues 306-319 (PPPVPVHKPPTKKP) and 327-345 (PPPVPVHKPPPKIVIPPPK).

This sequence belongs to the plant proline-rich protein superfamily. As to expression, mostly expressed in aerial organs, particularly in expanding leaves, stems, flowers, and siliques. Also present in stipules.

Its subcellular location is the secreted. It is found in the cell wall. The polypeptide is Proline-rich protein 4 (PRP4) (Arabidopsis thaliana (Mouse-ear cress)).